Here is a 257-residue protein sequence, read N- to C-terminus: Acetylglutamate kinase (257 aa).

Substrate contacts are provided by residues 41 to 42 (GG), R63, and N155.

It belongs to the acetylglutamate kinase family. ArgB subfamily.

It localises to the cytoplasm. The catalysed reaction is N-acetyl-L-glutamate + ATP = N-acetyl-L-glutamyl 5-phosphate + ADP. Its pathway is amino-acid biosynthesis; L-arginine biosynthesis; N(2)-acetyl-L-ornithine from L-glutamate: step 2/4. Its function is as follows. Catalyzes the ATP-dependent phosphorylation of N-acetyl-L-glutamate. The protein is Acetylglutamate kinase of Solibacter usitatus (strain Ellin6076).